Here is a 437-residue protein sequence, read N- to C-terminus: Bifunctional protein GlmU (437 aa).

A pyrophosphorylase region spans residues 1–223 (MHNTAVILAA…WDECRGVNSR (223 aa)). Residues 8–11 (LAAG), Lys22, Gln70, 75–76 (GT), 96–98 (YGD), Gly135, Glu149, Asn164, and Asn221 each bind UDP-N-acetyl-alpha-D-glucosamine. Asp98 serves as a coordination point for Mg(2+). Residue Asn221 coordinates Mg(2+). Residues 224–244 (AELAAAEAAMQSRLRAAALAA) are linker. The N-acetyltransferase stretch occupies residues 245–437 (GVTMTAPETV…AELRMTKGKR (193 aa)). 2 residues coordinate UDP-N-acetyl-alpha-D-glucosamine: Arg310 and Lys328. His340 serves as the catalytic Proton acceptor. Positions 343 and 354 each coordinate UDP-N-acetyl-alpha-D-glucosamine. Acetyl-CoA contacts are provided by residues Ala357, 363 to 364 (NY), Ser382, Ala400, and Arg417.

This sequence in the N-terminal section; belongs to the N-acetylglucosamine-1-phosphate uridyltransferase family. It in the C-terminal section; belongs to the transferase hexapeptide repeat family. Homotrimer. The cofactor is Mg(2+).

The protein localises to the cytoplasm. It catalyses the reaction alpha-D-glucosamine 1-phosphate + acetyl-CoA = N-acetyl-alpha-D-glucosamine 1-phosphate + CoA + H(+). It carries out the reaction N-acetyl-alpha-D-glucosamine 1-phosphate + UTP + H(+) = UDP-N-acetyl-alpha-D-glucosamine + diphosphate. It participates in nucleotide-sugar biosynthesis; UDP-N-acetyl-alpha-D-glucosamine biosynthesis; N-acetyl-alpha-D-glucosamine 1-phosphate from alpha-D-glucosamine 6-phosphate (route II): step 2/2. It functions in the pathway nucleotide-sugar biosynthesis; UDP-N-acetyl-alpha-D-glucosamine biosynthesis; UDP-N-acetyl-alpha-D-glucosamine from N-acetyl-alpha-D-glucosamine 1-phosphate: step 1/1. Its pathway is bacterial outer membrane biogenesis; LPS lipid A biosynthesis. Catalyzes the last two sequential reactions in the de novo biosynthetic pathway for UDP-N-acetylglucosamine (UDP-GlcNAc). The C-terminal domain catalyzes the transfer of acetyl group from acetyl coenzyme A to glucosamine-1-phosphate (GlcN-1-P) to produce N-acetylglucosamine-1-phosphate (GlcNAc-1-P), which is converted into UDP-GlcNAc by the transfer of uridine 5-monophosphate (from uridine 5-triphosphate), a reaction catalyzed by the N-terminal domain. This Acidiphilium cryptum (strain JF-5) protein is Bifunctional protein GlmU.